The sequence spans 428 residues: 3-phosphoshikimate 1-carboxyvinyltransferase (428 aa).

Residues lysine 22, serine 23, and arginine 27 each coordinate 3-phosphoshikimate. Lysine 22 is a phosphoenolpyruvate binding site. Phosphoenolpyruvate-binding residues include glycine 94 and arginine 122. 6 residues coordinate 3-phosphoshikimate: serine 169, serine 170, glutamine 171, serine 197, aspartate 315, and lysine 342. Glutamine 171 is a phosphoenolpyruvate binding site. Catalysis depends on aspartate 315, which acts as the Proton acceptor. Arginine 346, arginine 389, and lysine 414 together coordinate phosphoenolpyruvate.

Belongs to the EPSP synthase family. As to quaternary structure, monomer.

It localises to the cytoplasm. The catalysed reaction is 3-phosphoshikimate + phosphoenolpyruvate = 5-O-(1-carboxyvinyl)-3-phosphoshikimate + phosphate. The protein operates within metabolic intermediate biosynthesis; chorismate biosynthesis; chorismate from D-erythrose 4-phosphate and phosphoenolpyruvate: step 6/7. In terms of biological role, catalyzes the transfer of the enolpyruvyl moiety of phosphoenolpyruvate (PEP) to the 5-hydroxyl of shikimate-3-phosphate (S3P) to produce enolpyruvyl shikimate-3-phosphate and inorganic phosphate. This Cellvibrio japonicus (strain Ueda107) (Pseudomonas fluorescens subsp. cellulosa) protein is 3-phosphoshikimate 1-carboxyvinyltransferase.